A 239-amino-acid polypeptide reads, in one-letter code: tRNA (guanine-N(1)-)-methyltransferase (239 aa).

Residues Gly112 and 132–137 (IGDYVL) each bind S-adenosyl-L-methionine.

Belongs to the RNA methyltransferase TrmD family. Homodimer.

The protein resides in the cytoplasm. The enzyme catalyses guanosine(37) in tRNA + S-adenosyl-L-methionine = N(1)-methylguanosine(37) in tRNA + S-adenosyl-L-homocysteine + H(+). Specifically methylates guanosine-37 in various tRNAs. The protein is tRNA (guanine-N(1)-)-methyltransferase of Rhodospirillum rubrum (strain ATCC 11170 / ATH 1.1.1 / DSM 467 / LMG 4362 / NCIMB 8255 / S1).